Reading from the N-terminus, the 210-residue chain is Large ribosomal subunit protein uL3 (210 aa).

This sequence belongs to the universal ribosomal protein uL3 family. Part of the 50S ribosomal subunit. Forms a cluster with proteins L14 and L19.

In terms of biological role, one of the primary rRNA binding proteins, it binds directly near the 3'-end of the 23S rRNA, where it nucleates assembly of the 50S subunit. The sequence is that of Large ribosomal subunit protein uL3 from Natranaerobius thermophilus (strain ATCC BAA-1301 / DSM 18059 / JW/NM-WN-LF).